A 343-amino-acid polypeptide reads, in one-letter code: Hydroxymethylglutaryl-CoA synthase (343 aa).

Residues D28 and A29 each contribute to the (3S)-3-hydroxy-3-methylglutaryl-CoA site. E80 functions as the Proton donor/acceptor in the catalytic mechanism. Residue C112 coordinates (3S)-3-hydroxy-3-methylglutaryl-CoA. C112 acts as the Acyl-thioester intermediate in catalysis. R198 serves as a coordination point for CoA. Residues T200 and H233 each coordinate (3S)-3-hydroxy-3-methylglutaryl-CoA. H233 (proton donor/acceptor) is an active-site residue. K238 is a CoA binding site. Residues R242, N265, and S295 each contribute to the (3S)-3-hydroxy-3-methylglutaryl-CoA site.

This sequence belongs to the thiolase-like superfamily. Archaeal HMG-CoA synthase family. In terms of assembly, interacts with acetoacetyl-CoA thiolase that catalyzes the precedent step in the pathway and with a DUF35 protein. The acetoacetyl-CoA thiolase/HMG-CoA synthase complex channels the intermediate via a fused CoA-binding site, which allows for efficient coupling of the endergonic thiolase reaction with the exergonic HMGCS reaction.

The enzyme catalyses acetoacetyl-CoA + acetyl-CoA + H2O = (3S)-3-hydroxy-3-methylglutaryl-CoA + CoA + H(+). It functions in the pathway metabolic intermediate biosynthesis; (R)-mevalonate biosynthesis; (R)-mevalonate from acetyl-CoA: step 2/3. In terms of biological role, catalyzes the condensation of acetyl-CoA with acetoacetyl-CoA to form 3-hydroxy-3-methylglutaryl-CoA (HMG-CoA). Functions in the mevalonate (MVA) pathway leading to isopentenyl diphosphate (IPP), a key precursor for the biosynthesis of isoprenoid compounds that are building blocks of archaeal membrane lipids. In Archaeoglobus fulgidus (strain ATCC 49558 / DSM 4304 / JCM 9628 / NBRC 100126 / VC-16), this protein is Hydroxymethylglutaryl-CoA synthase.